Reading from the N-terminus, the 456-residue chain is NAD-dependent deacetylase sir2C (456 aa).

A Deacetylase sirtuin-type domain is found at 161-443 (IEIENNKIKE…LNLSKLLNWD (283 aa)). Residue His294 is the Proton acceptor of the active site. Cys302, Cys305, Cys331, and Cys336 together coordinate Zn(2+).

This sequence belongs to the sirtuin family. The cofactor is Zn(2+).

It carries out the reaction N(6)-acetyl-L-lysyl-[protein] + NAD(+) + H2O = 2''-O-acetyl-ADP-D-ribose + nicotinamide + L-lysyl-[protein]. Functionally, NAD-dependent deacetylase, which plays an important role in the regulation of transcriptional repression. This chain is NAD-dependent deacetylase sir2C (sir2C), found in Dictyostelium discoideum (Social amoeba).